The chain runs to 545 residues: Zinc finger protein with KRAB and SCAN domains 4 (545 aa).

The interval 1 to 22 (MAREPRKNAALDAQSAEDQTGL) is disordered. Residues Lys-26 and Lys-29 each participate in a glycyl lysine isopeptide (Lys-Gly) (interchain with G-Cter in SUMO2) cross-link. The segment at 34–55 (ALTAEVRAPCSPARGPERSRQR) is disordered. The region spanning 53 to 135 (RQRFRGFRYP…VLLEYLERQL (83 aa)) is the SCAN box domain. Glycyl lysine isopeptide (Lys-Gly) (interchain with G-Cter in SUMO2) cross-links involve residues Lys-178 and Lys-222. A KRAB domain is found at 221–317 (LKMEDVALTL…QRKQKNAIGS (97 aa)). 5 consecutive C2H2-type zinc fingers follow at residues 320-342 (HYCH…RRIH), 348-370 (YECE…QRVH), 376-398 (YECE…QRTH), 404-426 (YECD…HKIH), and 432-454 (YQCN…QRIH). Positions 455–467 (GDKNVQNPEHGES) are enriched in basic and acidic residues. A disordered region spans residues 455–480 (GDKNVQNPEHGESWESQGRTESQWEN). Polar residues predominate over residues 468–480 (WESQGRTESQWEN). C2H2-type zinc fingers lie at residues 487–509 (YKCN…QKIH) and 515–537 (YQCD…QRSH).

The protein belongs to the krueppel C2H2-type zinc-finger protein family. As to expression, expressed in adult heart, brain, placenta, lung and kidney, but not in adult liver and skeletal muscle. In 17-day old embryo, detected in liver, skeletal muscle, brain, heart and small intestine.

Its subcellular location is the nucleus. In terms of biological role, may be involved in the transcriptional activation of MDM2 and EP300 genes. The chain is Zinc finger protein with KRAB and SCAN domains 4 (ZKSCAN4) from Homo sapiens (Human).